We begin with the raw amino-acid sequence, 373 residues long: Thyroid hormone receptor beta (373 aa).

Residues methionine 1–leucine 18 form a modulating region. Residues cysteine 19, cysteine 22, cysteine 36, cysteine 39, cysteine 57, cysteine 63, cysteine 73, and cysteine 76 each coordinate Zn(2+). 2 NR C4-type zinc fingers span residues cysteine 19–cysteine 39 and cysteine 57–cysteine 81. The segment at residues cysteine 19–aspartate 93 is a DNA-binding region (nuclear receptor). The NR LBD domain occupies glutamate 129 to aspartate 373. Positions 194, 243, and 347 each coordinate 3,3',5-triiodo-L-thyronine. Residues arginine 194, asparagine 243, and histidine 347 each coordinate L-thyroxine.

It belongs to the nuclear hormone receptor family. NR1 subfamily.

The protein localises to the nucleus. Nuclear hormone receptor that can act as a repressor or activator of transcription. High affinity receptor for thyroid hormones, including triiodothyronine and thyroxine. The sequence is that of Thyroid hormone receptor beta (thrb) from Aquarana catesbeiana (American bullfrog).